Consider the following 1032-residue polypeptide: FACT complex subunit ctc-2 (1032 aa).

The interval 446-513 (DEEEAQPTPK…QKEGLAKYAE (68 aa)) is disordered. Residues 476 to 508 (LRSERNTTVDEDADKRRREHQKELAQKKQKEGL) are compositionally biased toward basic and acidic residues. Coiled-coil stretches lie at residues 485 to 506 (DEDA…KQKE), 624 to 658 (DRYA…EQDK), 785 to 805 (RRRR…IAEA), and 949 to 1010 (EVEE…RKAK). The disordered stretch occupies residues 943-1032 (NDSDDDEVEE…ERAAPKKRRK (90 aa)). Acidic residues-rich tracts occupy residues 944 to 979 (DSDD…DSEY) and 986 to 1004 (EASD…DWDE).

It belongs to the peptidase M24 family. SPT16 subfamily. Forms a stable heterodimer with ctc-1/pob3. The dimer of ctc-1 and ctc-2 weakly associates with multiple molecules of nhp-1/nhp6 to form the FACT complex.

It is found in the nucleus. It localises to the chromosome. Component of the FACT complex, a general chromatin factor that acts to reorganize nucleosomes. The FACT complex is involved in multiple processes that require DNA as a template such as mRNA elongation, DNA replication and DNA repair. During transcription elongation the FACT complex acts as a histone chaperone that both destabilizes and restores nucleosomal structure. It facilitates the passage of RNA polymerase II and transcription by promoting the dissociation of one histone H2A-H2B dimer from the nucleosome, then subsequently promotes the reestablishment of the nucleosome following the passage of RNA polymerase II. This chain is FACT complex subunit ctc-2 (ctc-2), found in Neurospora crassa (strain ATCC 24698 / 74-OR23-1A / CBS 708.71 / DSM 1257 / FGSC 987).